We begin with the raw amino-acid sequence, 469 residues long: Citrate synthase, mitochondrial (469 aa).

The transit peptide at 1-31 (MTLLTASSRAAARLLGAKNSSCIIFAARHAS) directs the protein to the mitochondrion. Catalysis depends on residues H304 and H350. R359 contributes to the oxaloacetate binding site. The active site involves D405. 2 residues coordinate oxaloacetate: R431 and R451.

It belongs to the citrate synthase family. As to quaternary structure, homodimer.

It is found in the mitochondrion matrix. It carries out the reaction oxaloacetate + acetyl-CoA + H2O = citrate + CoA + H(+). The protein operates within carbohydrate metabolism; tricarboxylic acid cycle; isocitrate from oxaloacetate: step 1/2. Key enzyme of the Krebs tricarboxylic acid cycle which catalyzes the synthesis of citrate from acetyl coenzyme A and oxaloacetate. This is Citrate synthase, mitochondrial (CS) from Amblyrhynchus cristatus (Galapagos marine iguana).